A 178-amino-acid chain; its full sequence is Caveolin-1 (178 aa).

Serine 2 is modified (N-acetylserine). Residue serine 2 is modified to Phosphoserine. Positions 2 to 94 are required for homooligomerization; the sequence is SGGKYIDSEG…WKASFTTFTV (93 aa). The Cytoplasmic portion of the chain corresponds to 2–104; that stretch reads SGGKYIDSEG…TKYWFYRLLS (103 aa). An N6-acetyllysine; alternate modification is found at lysine 5. Residue lysine 5 forms a Glycyl lysine isopeptide (Lys-Gly) (interchain with G-Cter in ubiquitin); alternate linkage. A Phosphotyrosine modification is found at tyrosine 6. Serine 9 carries the phosphoserine modification. Tyrosine 14 is modified (phosphotyrosine; by ABL1). At tyrosine 25 the chain carries Phosphotyrosine. Residues lysine 26, lysine 30, lysine 39, lysine 47, and lysine 57 each participate in a glycyl lysine isopeptide (Lys-Gly) (interchain with G-Cter in ubiquitin) cross-link. The interval 82-94 is interaction with CAVIN3; it reads DGIWKASFTTFTV. The helical intramembrane region spans 105–125; it reads ALFGIPMALIWGIYFAILSFL. Residues 126–178 lie on the Cytoplasmic side of the membrane; it reads HIWAVVPCIRSYLIEIQCISRIYSICIHTFCDPLFEAIGKIFSNVRIALQKEI. The segment at 131–142 is interacts with SPRY1, SPRY2, SPRY3 and SPRY4; sequence VPCIRSYLIEIQ. Residues cysteine 133, cysteine 143, and cysteine 156 are each lipidated (S-palmitoyl cysteine). The interacts with SPRY1, SPRY2, and SPRY4 stretch occupies residues 149 to 160; the sequence is SICIHTFCDPLF. The interval 167–178 is interacts with SPRY1, SPRY2, SPRY3 and SPRY4; that stretch reads FSNVRIALQKEI.

The protein belongs to the caveolin family. As to quaternary structure, homooligomer. Interacts with GLIPR2. Interacts with NOSTRIN. Interacts with SNAP25 and STX1A. Interacts (via the N-terminus) with DPP4; the interaction is direct. Interacts with CTNNB1, CDH1 and JUP. Interacts with PACSIN2; this interaction induces membrane tubulation. Interacts with SLC7A9. Interacts with BMX and BTK. Interacts with TGFBR1. Interacts with CAVIN3 (via leucine-zipper domain) in a cholesterol-sensitive manner. Interacts with CAVIN1. Interacts with EHD2 in a cholesterol-dependent manner. Forms a ternary complex with UBXN6 and VCP; mediates CAV1 targeting to lysosomes for degradation. Interacts with ABCG1; this interaction regulates ABCG1-mediated cholesterol efflux. Interacts with NEU3; this interaction enhances NEU3 sialidase activity within caveola. Interacts (via C-terminus) with SPRY1, SPRY2 (via C-terminus), SPRY3, and SPRY4. Interacts with IGFBP5; this interaction allows trafficking of IGFBP5 from the plasma membrane to the nucleus. In terms of processing, phosphorylated at Tyr-14 by ABL1 in response to oxidative stress. Ubiquitinated. Undergo monoubiquitination and multi- and/or polyubiquitination. Monoubiquitination of N-terminal lysines promotes integration in a ternary complex with UBXN6 and VCP which promotes oligomeric CAV1 targeting to lysosomes for degradation. Ubiquitinated by ZNRF1; leading to degradation and modulation of the TLR4-mediated immune response.

Its subcellular location is the golgi apparatus membrane. The protein localises to the cell membrane. It localises to the membrane. The protein resides in the caveola. It is found in the membrane raft. Functionally, may act as a scaffolding protein within caveolar membranes. Forms a stable heterooligomeric complex with CAV2 that targets to lipid rafts and drives caveolae formation. Mediates the recruitment of CAVIN proteins (CAVIN1/2/3/4) to the caveolae. Interacts directly with G-protein alpha subunits and can functionally regulate their activity. Involved in the costimulatory signal essential for T-cell receptor (TCR)-mediated T-cell activation. Its binding to DPP4 induces T-cell proliferation and NF-kappa-B activation in a T-cell receptor/CD3-dependent manner. Recruits CTNNB1 to caveolar membranes and may regulate CTNNB1-mediated signaling through the Wnt pathway. Negatively regulates TGFB1-mediated activation of SMAD2/3 by mediating the internalization of TGFBR1 from membrane rafts leading to its subsequent degradation. Binds 20(S)-hydroxycholesterol (20(S)-OHC). The polypeptide is Caveolin-1 (CAV1) (Didelphis virginiana (North American opossum)).